A 340-amino-acid polypeptide reads, in one-letter code: Solute-binding protein Dde_0634 (340 aa).

The N-terminal stretch at 1–29 (MKSTFAALLIMVGCLVSGALLTGSEAAAA) is a signal peptide. Residues Y99, R172, 210 to 213 (TSLD), and Y235 contribute to the (indol-3-yl)acetate site.

The protein belongs to the bacterial solute-binding protein 7 family. In terms of assembly, the complex is comprised of an extracytoplasmic solute-binding protein and a heteromeric permease formed by two transmembrane proteins.

The protein localises to the periplasm. Solute-binding protein that binds indole-3-pyruvate and indole-3-acetate (in vitro). Can also bind D-tryptophan (in vitro), but that is probably not a physiological ligand. Probably part of a tripartite ATP-independent periplasmic (TRAP) transport system that mediates solute transport into the cytoplasm. This chain is Solute-binding protein Dde_0634, found in Oleidesulfovibrio alaskensis (strain ATCC BAA-1058 / DSM 17464 / G20) (Desulfovibrio alaskensis).